A 291-amino-acid polypeptide reads, in one-letter code: Undecaprenyl-diphosphatase (291 aa).

8 helical membrane-spanning segments follow: residues 1–21 (MFII…LTEF), 48–68 (SAFT…AWVF), 102–122 (LHVL…DDFI), 126–146 (LFSV…MIIA), 162–182 (INYF…WPGF), 203–223 (SDFT…LSLL), 231–251 (IADI…GLIA), and 267–287 (FAIY…GFGI).

This sequence belongs to the UppP family.

The protein resides in the cell membrane. It carries out the reaction di-trans,octa-cis-undecaprenyl diphosphate + H2O = di-trans,octa-cis-undecaprenyl phosphate + phosphate + H(+). In terms of biological role, catalyzes the dephosphorylation of undecaprenyl diphosphate (UPP). Confers resistance to bacitracin. This chain is Undecaprenyl-diphosphatase, found in Staphylococcus aureus (strain Mu3 / ATCC 700698).